The primary structure comprises 41 residues: Large ribosomal subunit protein bL36 (41 aa).

The protein belongs to the bacterial ribosomal protein bL36 family.

This is Large ribosomal subunit protein bL36 from Caulobacter vibrioides (strain ATCC 19089 / CIP 103742 / CB 15) (Caulobacter crescentus).